The chain runs to 318 residues: Aspartate carbamoyltransferase catalytic subunit (318 aa).

Carbamoyl phosphate-binding residues include Arg-58 and Thr-59. Lys-86 contributes to the L-aspartate binding site. Arg-108, His-141, and Gln-144 together coordinate carbamoyl phosphate. The L-aspartate site is built by Arg-174 and Arg-226. Residues Gly-270 and Pro-271 each coordinate carbamoyl phosphate.

Belongs to the aspartate/ornithine carbamoyltransferase superfamily. ATCase family. In terms of assembly, heterododecamer (2C3:3R2) of six catalytic PyrB chains organized as two trimers (C3), and six regulatory PyrI chains organized as three dimers (R2).

It catalyses the reaction carbamoyl phosphate + L-aspartate = N-carbamoyl-L-aspartate + phosphate + H(+). Its pathway is pyrimidine metabolism; UMP biosynthesis via de novo pathway; (S)-dihydroorotate from bicarbonate: step 2/3. In terms of biological role, catalyzes the condensation of carbamoyl phosphate and aspartate to form carbamoyl aspartate and inorganic phosphate, the committed step in the de novo pyrimidine nucleotide biosynthesis pathway. This chain is Aspartate carbamoyltransferase catalytic subunit, found in Lactobacillus helveticus (strain DPC 4571).